The chain runs to 40 residues: Ferredoxin-2 (40 aa).

The 2Fe-2S ferredoxin-type domain maps to 3–40 (YNIKLITPEGTKEITCSDSEYILDAAEEKGLDLPYSCR). [2Fe-2S] cluster is bound at residue C39.

This sequence belongs to the 2Fe2S plant-type ferredoxin family. [2Fe-2S] cluster is required as a cofactor.

Its subcellular location is the plastid. The protein resides in the chloroplast. Ferredoxins are iron-sulfur proteins that transfer electrons in a wide variety of metabolic reactions. This Pisum sativum (Garden pea) protein is Ferredoxin-2.